Consider the following 602-residue polypeptide: (R)-limonene synthase (602 aa).

Mg(2+) is bound by residues aspartate 356, aspartate 360, aspartate 500, threonine 504, and glutamate 508. Residues 356 to 360 carry the DDXXD motif motif; the sequence is DDVYD.

The protein belongs to the terpene synthase family. Requires Mg(2+) as cofactor. The cofactor is Mn(2+).

It carries out the reaction (2E)-geranyl diphosphate = (4R)-limonene + diphosphate. Catalyzes the formation of (R)-(+)-limonene, terpinolene, (1R,5S)-(+)-camphene, (1R,5R)-(+)-alpha-pinene, beta-myrcene and traces of alpha-phellandrene. The chain is (R)-limonene synthase from Lavandula angustifolia (Lavender).